The chain runs to 259 residues: Isoprenyl transferase (259 aa).

Residue Asp-33 is part of the active site. Asp-33 serves as a coordination point for Mg(2+). Substrate contacts are provided by residues 34–37, Trp-38, His-51, and 79–81; these read GNRR and STE. Catalysis depends on Asn-82, which acts as the Proton acceptor. Substrate contacts are provided by residues Arg-86, Arg-208, and 214-216; that span reads RMS. Residue Glu-227 participates in Mg(2+) binding.

The protein belongs to the UPP synthase family. Homodimer. Mg(2+) is required as a cofactor.

Functionally, catalyzes the condensation of isopentenyl diphosphate (IPP) with allylic pyrophosphates generating different type of terpenoids. This Streptomyces fradiae (Streptomyces roseoflavus) protein is Isoprenyl transferase.